The primary structure comprises 569 residues: Adenine deaminase (569 aa).

The protein belongs to the metallo-dependent hydrolases superfamily. Adenine deaminase family. Mn(2+) serves as cofactor.

The enzyme catalyses adenine + H2O + H(+) = hypoxanthine + NH4(+). The chain is Adenine deaminase from Desulfatibacillum aliphaticivorans.